Reading from the N-terminus, the 451-residue chain is Metalloprotease MJ0996 (451 aa).

It belongs to the peptidase U62 family.

In terms of biological role, probable metalloprotease. This Methanocaldococcus jannaschii (strain ATCC 43067 / DSM 2661 / JAL-1 / JCM 10045 / NBRC 100440) (Methanococcus jannaschii) protein is Metalloprotease MJ0996.